A 582-amino-acid chain; its full sequence is Probable DNA ligase (582 aa).

ATP is bound at residue Glu-248. Lys-250 acts as the N6-AMP-lysine intermediate in catalysis. ATP contacts are provided by Arg-255, Arg-270, Glu-299, Phe-339, Arg-416, and Lys-422.

It belongs to the ATP-dependent DNA ligase family. The cofactor is Mg(2+).

The enzyme catalyses ATP + (deoxyribonucleotide)n-3'-hydroxyl + 5'-phospho-(deoxyribonucleotide)m = (deoxyribonucleotide)n+m + AMP + diphosphate.. Its function is as follows. DNA ligase that seals nicks in double-stranded DNA during DNA replication, DNA recombination and DNA repair. The polypeptide is Probable DNA ligase (Persephonella marina (strain DSM 14350 / EX-H1)).